Here is a 265-residue protein sequence, read N- to C-terminus: Ribosomal RNA small subunit methyltransferase A (265 aa).

6 residues coordinate S-adenosyl-L-methionine: N13, L15, G40, E61, D85, and N103.

The protein belongs to the class I-like SAM-binding methyltransferase superfamily. rRNA adenine N(6)-methyltransferase family. RsmA subfamily.

It is found in the cytoplasm. The catalysed reaction is adenosine(1518)/adenosine(1519) in 16S rRNA + 4 S-adenosyl-L-methionine = N(6)-dimethyladenosine(1518)/N(6)-dimethyladenosine(1519) in 16S rRNA + 4 S-adenosyl-L-homocysteine + 4 H(+). In terms of biological role, specifically dimethylates two adjacent adenosines (A1518 and A1519) in the loop of a conserved hairpin near the 3'-end of 16S rRNA in the 30S particle. May play a critical role in biogenesis of 30S subunits. This chain is Ribosomal RNA small subunit methyltransferase A, found in Aromatoleum aromaticum (strain DSM 19018 / LMG 30748 / EbN1) (Azoarcus sp. (strain EbN1)).